We begin with the raw amino-acid sequence, 229 residues long: Aldehyde oxidoreductase iron-sulfur-binding subunit PaoA (229 aa).

The interval 1–21 is disordered; sequence MSNQGEYPEDNRVGKHEPHDL. The segment at residues 1 to 53 is a signal peptide (tat-type signal); it reads MSNQGEYPEDNRVGKHEPHDLSLTRRDLIKVSAATAAAAVVYPHSTLAASVPA. Basic and acidic residues predominate over residues 9–21; sequence EDNRVGKHEPHDL. Residues 61 to 137 form the 2Fe-2S ferredoxin-type domain; sequence MPLTLKVNGK…GAEITTIEGL (77 aa). Positions 99, 104, 105, 107, 119, 158, 161, 208, and 210 each coordinate [2Fe-2S] cluster.

As to quaternary structure, heterotrimer composed of PaoA, PaoB and PaoC. [2Fe-2S] cluster is required as a cofactor. Post-translationally, exported by the Tat system. The position of the signal peptide cleavage has not been experimentally proven.

The protein localises to the periplasm. The enzyme catalyses an aldehyde + A + H2O = a carboxylate + AH2 + H(+). Its function is as follows. Oxidizes aldehydes to the corresponding carboxylic acids with a preference for aromatic aldehydes. It might play a role in the detoxification of aldehydes to avoid cell damage. In Escherichia coli O157:H7, this protein is Aldehyde oxidoreductase iron-sulfur-binding subunit PaoA.